The sequence spans 538 residues: Putative cysteine ligase BshC (538 aa).

The stretch at 248-268 (ISKYKEVQEGLRNQQEVIKEL) forms a coiled coil.

It belongs to the BshC family.

In terms of biological role, involved in bacillithiol (BSH) biosynthesis. May catalyze the last step of the pathway, the addition of cysteine to glucosamine malate (GlcN-Mal) to generate BSH. The sequence is that of Putative cysteine ligase BshC from Bacillus cereus (strain G9842).